The primary structure comprises 169 residues: Cytochrome c oxidase subunit 4 isoform 1, mitochondrial (169 aa).

A mitochondrion-targeting transit peptide spans Met1–Arg22. Topologically, residues Ala23–Asn98 are mitochondrial matrix. Lys29 bears the N6-acetyllysine; alternate mark. Lys29 carries the N6-succinyllysine; alternate modification. An N6-acetyllysine modification is found at Lys53. Phosphoserine occurs at positions 56 and 58. An N6-acetyllysine; alternate modification is found at Lys60. Position 60 is an N6-succinyllysine; alternate (Lys60). Lys67 carries the post-translational modification N6-acetyllysine. Residues Glu99–Tyr124 traverse the membrane as a helical segment. The Mitochondrial intermembrane portion of the chain corresponds to Val125–Lys169.

The protein belongs to the cytochrome c oxidase IV family. Component of the cytochrome c oxidase (complex IV, CIV), a multisubunit enzyme composed of 14 subunits. The complex is composed of a catalytic core of 3 subunits MT-CO1, MT-CO2 and MT-CO3, encoded in the mitochondrial DNA, and 11 supernumerary subunits COX4I1 (or COX4I2), COX5A, COX5B, COX6A2 (or COX6A1), COX6B1 (or COX6B2), COX6C, COX7A1 (or COX7A2), COX7B, COX7C, COX8B and NDUFA4, which are encoded in the nuclear genome. The complex exists as a monomer or a dimer and forms supercomplexes (SCs) in the inner mitochondrial membrane with NADH-ubiquinone oxidoreductase (complex I, CI) and ubiquinol-cytochrome c oxidoreductase (cytochrome b-c1 complex, complex III, CIII), resulting in different assemblies (supercomplex SCI(1)III(2)IV(1) and megacomplex MCI(2)III(2)IV(2)). Interacts with PHB2; the interaction decreases in absence of SPHK2. Interacts with AFG1L. Interacts with ABCB7; this interaction allows the regulation of cellular iron homeostasis and cellular reactive oxygen species (ROS) levels in cardiomyocytes. Interacts with FLVCR2; this interaction occurs in the absence of heme and is disrupted upon heme binding. Interacts with IRGC.

The protein resides in the mitochondrion inner membrane. It functions in the pathway energy metabolism; oxidative phosphorylation. Functionally, component of the cytochrome c oxidase, the last enzyme in the mitochondrial electron transport chain which drives oxidative phosphorylation. The respiratory chain contains 3 multisubunit complexes succinate dehydrogenase (complex II, CII), ubiquinol-cytochrome c oxidoreductase (cytochrome b-c1 complex, complex III, CIII) and cytochrome c oxidase (complex IV, CIV), that cooperate to transfer electrons derived from NADH and succinate to molecular oxygen, creating an electrochemical gradient over the inner membrane that drives transmembrane transport and the ATP synthase. Cytochrome c oxidase is the component of the respiratory chain that catalyzes the reduction of oxygen to water. Electrons originating from reduced cytochrome c in the intermembrane space (IMS) are transferred via the dinuclear copper A center (CU(A)) of subunit 2 and heme A of subunit 1 to the active site in subunit 1, a binuclear center (BNC) formed by heme A3 and copper B (CU(B)). The BNC reduces molecular oxygen to 2 water molecules using 4 electrons from cytochrome c in the IMS and 4 protons from the mitochondrial matrix. This is Cytochrome c oxidase subunit 4 isoform 1, mitochondrial (COX4I1) from Bos taurus (Bovine).